The following is a 601-amino-acid chain: Probable translation initiation factor IF-2 (601 aa).

The region spanning 10–227 is the tr-type G domain; that stretch reads LRAPIVVVLG…VLAGLAQRYL (218 aa). The interval 19–26 is G1; that stretch reads GHVDAGKT. 19 to 26 serves as a coordination point for GTP; sequence GHVDAGKT. The tract at residues 44-48 is G2; that stretch reads TMTQH. The segment at 83 to 86 is G3; that stretch reads DTPG. GTP is bound by residues 83-87 and 137-140; these read DTPGH and NKID. The segment at 137-140 is G4; sequence NKID. A G5 region spans residues 205–207; sequence SAV.

Belongs to the TRAFAC class translation factor GTPase superfamily. Classic translation factor GTPase family. IF-2 subfamily.

Functionally, function in general translation initiation by promoting the binding of the formylmethionine-tRNA to ribosomes. Seems to function along with eIF-2. The sequence is that of Probable translation initiation factor IF-2 from Thermofilum pendens (strain DSM 2475 / Hrk 5).